Consider the following 213-residue polypeptide: Octanoyltransferase (213 aa).

A BPL/LPL catalytic domain is found at 27–209; that stretch reads AATPDEVWLC…RLLAAMPEPA (183 aa). Substrate-binding positions include 66–73, 140–142, and 153–155; these read RGGQVTYH, ALG, and GVA. Cys-171 serves as the catalytic Acyl-thioester intermediate.

Belongs to the LipB family.

Its subcellular location is the cytoplasm. The catalysed reaction is octanoyl-[ACP] + L-lysyl-[protein] = N(6)-octanoyl-L-lysyl-[protein] + holo-[ACP] + H(+). The protein operates within protein modification; protein lipoylation via endogenous pathway; protein N(6)-(lipoyl)lysine from octanoyl-[acyl-carrier-protein]: step 1/2. Catalyzes the transfer of endogenously produced octanoic acid from octanoyl-acyl-carrier-protein onto the lipoyl domains of lipoate-dependent enzymes. Lipoyl-ACP can also act as a substrate although octanoyl-ACP is likely to be the physiological substrate. The polypeptide is Octanoyltransferase (Bordetella petrii (strain ATCC BAA-461 / DSM 12804 / CCUG 43448)).